A 274-amino-acid polypeptide reads, in one-letter code: Large ribosomal subunit protein uL2cz/uL2cy (274 aa).

Positions 224–274 (NPVDHPHGGGEGRAPIGRKKPATPWGYPALGRRSRKRNKYSDNLILRRRSK) are disordered.

This sequence belongs to the universal ribosomal protein uL2 family. As to quaternary structure, part of the 50S ribosomal subunit.

It is found in the plastid. Its subcellular location is the chloroplast. The chain is Large ribosomal subunit protein uL2cz/uL2cy (rpl2-A) from Morus indica (Mulberry).